The sequence spans 305 residues: UDP-3-O-acyl-N-acetylglucosamine deacetylase (305 aa).

3 residues coordinate Zn(2+): histidine 79, histidine 238, and aspartate 242. Catalysis depends on histidine 265, which acts as the Proton donor.

It belongs to the LpxC family. It depends on Zn(2+) as a cofactor.

It carries out the reaction a UDP-3-O-[(3R)-3-hydroxyacyl]-N-acetyl-alpha-D-glucosamine + H2O = a UDP-3-O-[(3R)-3-hydroxyacyl]-alpha-D-glucosamine + acetate. It functions in the pathway glycolipid biosynthesis; lipid IV(A) biosynthesis; lipid IV(A) from (3R)-3-hydroxytetradecanoyl-[acyl-carrier-protein] and UDP-N-acetyl-alpha-D-glucosamine: step 2/6. Functionally, catalyzes the hydrolysis of UDP-3-O-myristoyl-N-acetylglucosamine to form UDP-3-O-myristoylglucosamine and acetate, the committed step in lipid A biosynthesis. The sequence is that of UDP-3-O-acyl-N-acetylglucosamine deacetylase from Enterobacter sp. (strain 638).